Here is a 255-residue protein sequence, read N- to C-terminus: Microfibril-associated glycoprotein 4 (255 aa).

Residues 1-20 (MEALLVLPLLLLLSAGPCAP) form the signal peptide. The short motif at 26–28 (RGD) is the Cell attachment site element. Residues 32–255 (KSCLQLPLDC…KRTEMKIRRA (224 aa)) form the Fibrinogen C-terminal domain. N-linked (GlcNAc...) asparagine glycans are attached at residues Asn-87 and Asn-137.

As to quaternary structure, homodimer. Can also form higher oligomers. Interacts with FBN1, FBN2 and LOX. Interacts with COL1A1 in a Ca (2+)-dependent manner. Interacts with ELN in a Ca (2+)-dependent manner; this interaction promotes ELN self-assembly.

It is found in the secreted. The protein resides in the extracellular space. Its subcellular location is the extracellular matrix. In terms of biological role, could be involved in calcium-dependent cell adhesion or intercellular interactions. May contribute to the elastic fiber assembly and/or maintenance. The sequence is that of Microfibril-associated glycoprotein 4 (MFAP4) from Bos taurus (Bovine).